The chain runs to 906 residues: Catenin alpha-1 (906 aa).

Thr2 is modified (N-acetylthreonine). The interval 2–228 (TAVHAGNINF…PILYTASQAC (227 aa)) is involved in homodimerization. A Glycyl lysine isopeptide (Lys-Gly) (interchain with G-Cter in SUMO2) cross-link involves residue Lys57. The interaction with JUP and CTNNB1 stretch occupies residues 97-148 (VRKQGDLMKSAAGEFADDPCSSVKRGNMVRAARALLSAVTRLLILADMADVY). Ser264, Ser295, and Ser297 each carry phosphoserine. The tract at residues 325-394 (TRDDRRERIV…AVMDHVSDSF (70 aa)) is interaction with alpha-actinin. Thr634 carries the post-translational modification Phosphothreonine. Ser641 is subject to Phosphoserine. The residue at position 645 (Thr645) is a Phosphothreonine. Ser652 and Ser655 each carry phosphoserine. Thr658 carries the post-translational modification Phosphothreonine. Residue Lys797 forms a Glycyl lysine isopeptide (Lys-Gly) (interchain with G-Cter in SUMO2) linkage. Phosphoserine is present on Ser851. Residues 864 to 880 (PEKKPLVKREKQDETQT) are compositionally biased toward basic and acidic residues. A disordered region spans residues 864-894 (PEKKPLVKREKQDETQTKIKRASQKKHVNPV). Over residues 881–891 (KIKRASQKKHV) the composition is skewed to basic residues.

Belongs to the vinculin/alpha-catenin family. In terms of assembly, monomer and homodimer; the monomer preferentially binds to CTNNB1 and the homodimer to actin. Component of an cadherin:catenin adhesion complex composed of at least of CDH26, beta-catenin/CTNNB1, alpha-catenin/CTNNA1 and p120 catenin/CTNND1. Possible component of an E-cadherin/ catenin adhesion complex together with E-cadherin/CDH1 and beta-catenin/CTNNB1 or gamma-catenin/JUP; the complex is located to adherens junctions. The stable association of CTNNA1 is controversial as CTNNA1 was shown not to bind to F-actin when assembled in the complex. Alternatively, the CTNNA1-containing complex may be linked to F-actin by other proteins such as LIMA1. Binds AFDN and F-actin. Interacts with LIMA1. Interacts with ARHGAP21. Interacts with AJUBA. Interacts with vinculin/VCL. Interacts with TJP2/ZO2 (via N-terminus). Interacts with TJP1/ZO1 (via N-terminus). Sumoylated. In terms of processing, phosphorylation seems to contribute to the strength of cell-cell adhesion rather than to the basic capacity for cell-cell adhesion. As to expression, expressed in cerebellum, heart, liver, small intestine, kidney and placenta (at protein level).

The protein resides in the cytoplasm. The protein localises to the cytoskeleton. It localises to the cell junction. Its subcellular location is the adherens junction. It is found in the cell membrane. The protein resides in the nucleus. In terms of biological role, associates with the cytoplasmic domain of a variety of cadherins. The association of catenins to cadherins produces a complex which is linked to the actin filament network, and which seems to be of primary importance for cadherins cell-adhesion properties. Can associate with both E- and N-cadherins. Originally believed to be a stable component of E-cadherin/catenin adhesion complexes and to mediate the linkage of cadherins to the actin cytoskeleton at adherens junctions. In contrast, cortical actin was found to be much more dynamic than E-cadherin/catenin complexes and CTNNA1 was shown not to bind to F-actin when assembled in the complex suggesting a different linkage between actin and adherens junctions components. The homodimeric form may regulate actin filament assembly and inhibit actin branching by competing with the Arp2/3 complex for binding to actin filaments. Involved in the regulation of WWTR1/TAZ, YAP1 and TGFB1-dependent SMAD2 and SMAD3 nuclear accumulation. May play a crucial role in cell differentiation. The sequence is that of Catenin alpha-1 from Mus musculus (Mouse).